Consider the following 520-residue polypeptide: Keratin, type II cytoskeletal 78 (520 aa).

The segment at 1–110 (MSLSPCRAQR…DPQFQVVRTQ (110 aa)) is head. The segment at 111 to 146 (ETQEIRTLNNQFASFIDKVRFLEQQNKVLETKWHLL) is coil 1A. The region spanning 111–424 (ETQEIRTLNN…RLLEGEECRM (314 aa)) is the IF rod domain. The tract at residues 147-165 (QQQGLSGSQQGLEPVFEAC) is linker 1. The tract at residues 166–258 (LDQLRKQLEQ…LNEEELGQLQ (93 aa)) is coil 1B. A linker 12 region spans residues 259–281 (TQASDTSVVLSMDNNRYLDFSSI). Positions 282–421 (ITEVRARYEE…TYRRLLEGEE (140 aa)) are coil 2. The tail stretch occupies residues 422–520 (CRMSGECTSQ…ESSLKTSITY (99 aa)).

The protein belongs to the intermediate filament family. As to quaternary structure, heterotetramer of two type I and two type II keratins. As to expression, in non-keratinising esophageal and vaginal epithelium, strongly expressed in the basal and parabasal/lower suprabasal cell layers with considerably decreased expression in the mid/upper suprabasal layers (at protein level). A similar gradient from basal to lower suprabasal layers is seen in the partially keratinised dorsal tongue epithelium, in the scalp and in the plantar epidermis (at protein level). Extension of expression into the suprabasal compartments is distinctly more pronounced in non-keratinising epithelia than in keratinising epithelia and epidermis (at protein level). In scalp sections, present in the interfollicular epidermis and infundibulum including the entire outer root sheath of the hair follicles and also in the sebocytes (at protein level). In sweat glands, expressed in peripheral and luminal cells of the lower duct and in peripheral cells of the middle/upper duct with no expression observed in luminal cells (at protein level). In embryos at the 14th week of pregnancy, detected in basal and parabasal layers but is absent from the uppermost epidermal layer (at protein level). Expressed in tongue epithelium.

This Homo sapiens (Human) protein is Keratin, type II cytoskeletal 78 (KRT78).